A 129-amino-acid polypeptide reads, in one-letter code: MIRNVKKQRPVNLDLQTIRFPITAIASILHRVSGVITFVAVGILLWLLGTSLSSPEGFEQASAIMGSFFVKFIMWGILTALAYHVVVGIRHMMMDFGYLEETFEAGKRSAKISFVITVVLSLLAGVLVW.

At 1-26 the chain is on the cytoplasmic side; that stretch reads MIRNVKKQRPVNLDLQTIRFPITAIA. The chain crosses the membrane as a helical span at residues 27 to 52; the sequence is SILHRVSGVITFVAVGILLWLLGTSL. Residues 53-68 lie on the Periplasmic side of the membrane; the sequence is SSPEGFEQASAIMGSF. A helical membrane pass occupies residues 69-89; that stretch reads FVKFIMWGILTALAYHVVVGI. A heme-binding site is contributed by His-84. Topologically, residues 90-108 are cytoplasmic; sequence RHMMMDFGYLEETFEAGKR. A helical membrane pass occupies residues 109-129; sequence SAKISFVITVVLSLLAGVLVW.

Belongs to the cytochrome b560 family. In terms of assembly, part of an enzyme complex containing four subunits: a flavoprotein, an iron-sulfur protein, plus two membrane-anchoring proteins, SdhC and SdhD. The complex can form homotrimers. The cofactor is heme.

The protein localises to the cell inner membrane. The protein operates within carbohydrate metabolism; tricarboxylic acid cycle. Functionally, membrane-anchoring subunit of succinate dehydrogenase (SDH). The polypeptide is Succinate dehydrogenase cytochrome b556 subunit (sdhC) (Escherichia coli O157:H7).